We begin with the raw amino-acid sequence, 100 residues long: Bombyxin A-2 homolog (100 aa).

The first 18 residues, 1-18, serve as a signal peptide directing secretion; the sequence is MRTQVLFLIVVLAVMASG. 3 cysteine pairs are disulfide-bonded: Cys26-Cys85, Cys38-Cys98, and Cys84-Cys89. The propeptide at 47-75 is c peptide like; sequence PPYISSENEGYGWKWLERQRARQLDEARG.

It belongs to the insulin family. As to quaternary structure, heterodimer of a B chain and an A chain linked by two disulfide bonds.

Its subcellular location is the secreted. Functionally, brain peptide responsible for activation of prothoracic glands to produce ecdysone in insects. The sequence is that of Bombyxin A-2 homolog (SBXA2) from Samia cynthia (Ailanthus silkmoth).